A 29-amino-acid chain; its full sequence is Trypsin inhibitor 4 (29 aa).

3 disulfides stabilise this stretch: C3–C20, C10–C22, and C16–C28.

The protein belongs to the protease inhibitor I7 (squash-type serine protease inhibitor) family.

It is found in the secreted. Functionally, strongly inhibits trypsin, weakly inhibits chymotrypsin. The chain is Trypsin inhibitor 4 from Cyclanthera pedata (Achocha).